The chain runs to 716 residues: 1,4-alpha-glucan branching enzyme GlgB (716 aa).

Asp399 serves as the catalytic Nucleophile. Glu452 (proton donor) is an active-site residue.

The protein belongs to the glycosyl hydrolase 13 family. GlgB subfamily. In terms of assembly, monomer.

It catalyses the reaction Transfers a segment of a (1-&gt;4)-alpha-D-glucan chain to a primary hydroxy group in a similar glucan chain.. Its pathway is glycan biosynthesis; glycogen biosynthesis. Its function is as follows. Catalyzes the formation of the alpha-1,6-glucosidic linkages in glycogen by scission of a 1,4-alpha-linked oligosaccharide from growing alpha-1,4-glucan chains and the subsequent attachment of the oligosaccharide to the alpha-1,6 position. In Rhodopseudomonas palustris (strain BisB5), this protein is 1,4-alpha-glucan branching enzyme GlgB.